The sequence spans 141 residues: Nucleoside diphosphate kinase (141 aa).

ATP is bound by residues lysine 9, phenylalanine 57, arginine 85, threonine 91, arginine 102, and asparagine 112. Histidine 115 functions as the Pros-phosphohistidine intermediate in the catalytic mechanism.

This sequence belongs to the NDK family. Homotetramer. It depends on Mg(2+) as a cofactor.

Its subcellular location is the cytoplasm. It catalyses the reaction a 2'-deoxyribonucleoside 5'-diphosphate + ATP = a 2'-deoxyribonucleoside 5'-triphosphate + ADP. The catalysed reaction is a ribonucleoside 5'-diphosphate + ATP = a ribonucleoside 5'-triphosphate + ADP. Its function is as follows. Major role in the synthesis of nucleoside triphosphates other than ATP. The ATP gamma phosphate is transferred to the NDP beta phosphate via a ping-pong mechanism, using a phosphorylated active-site intermediate. In Chlamydia caviae (strain ATCC VR-813 / DSM 19441 / 03DC25 / GPIC) (Chlamydophila caviae), this protein is Nucleoside diphosphate kinase.